The following is a 431-amino-acid chain: Urokinase-type plasminogen activator (431 aa).

An N-terminal signal peptide occupies residues 1 to 20; sequence MRALLARLLLCVLVVSDSKG. The EGF-like domain occupies 27–63; the sequence is VPSNCDCLNGGTCVSNKYFSNIHWCNCPKKFGGQHCE. Cystine bridges form between cysteine 31–cysteine 39, cysteine 33–cysteine 51, cysteine 53–cysteine 62, cysteine 70–cysteine 151, cysteine 91–cysteine 133, and cysteine 122–cysteine 146. The binds urokinase plasminogen activator surface receptor stretch occupies residues 34–57; the sequence is LNGGTCVSNKYFSNIHWCNCPKKF. In terms of domain architecture, Kringle spans 69–151; the sequence is TCYEGNGHFY…LVQECMVHDC (83 aa). The interval 152-178 is connecting peptide; it reads ADGKKPSSPPEELKFQCGQKTLRPRFK. The residue at position 158 (serine 158) is a Phosphoserine. 6 disulfides stabilise this stretch: cysteine 168–cysteine 299, cysteine 209–cysteine 225, cysteine 217–cysteine 288, cysteine 313–cysteine 382, cysteine 345–cysteine 361, and cysteine 372–cysteine 400. The region spanning 179–424 is the Peptidase S1 domain; sequence IVGGEFTTIE…FLPWIRSHTK (246 aa). Active-site charge relay system residues include histidine 224 and aspartate 275. Residue asparagine 322 is glycosylated (N-linked (GlcNAc...) asparagine). Phosphoserine is present on serine 323. Serine 376 (charge relay system) is an active-site residue.

This sequence belongs to the peptidase S1 family. As to quaternary structure, found in high and low molecular mass forms. Each consists of two chains, A and B. The high molecular mass form contains a long chain A which is cleaved to yield a short chain A. Forms heterodimer with SERPINA5. Binds LRP1B; binding is followed by internalization and degradation. Interacts with MRC2. Interacts with PLAUR. In complex with SERPINE1, interacts with PLAUR/uPAR. Interacts with SORL1 and LRP1, either alone or in complex with SERPINE1; these interactions are abolished in the presence of LRPAP1/RAP. The ternary complex composed of PLAUR-PLAU-PAI1 also interacts with SORLA. Post-translationally, phosphorylation of Ser-158 and Ser-323 abolishes proadhesive ability but does not interfere with receptor binding. Produced as an inactive single-chain protein (pro-uPA or sc-uPA), is processed into the active disulfide-linked two-chain form of PLAU/uPA by a proteolytic event mediated, at least, by TMPRSS4.

The protein localises to the secreted. It catalyses the reaction Specific cleavage of Arg-|-Val bond in plasminogen to form plasmin.. Inhibited by SERPINA5. Inhibited by SERPINE1. Specifically cleaves the zymogen plasminogen to form the active enzyme plasmin. This Pongo abelii (Sumatran orangutan) protein is Urokinase-type plasminogen activator (PLAU).